The sequence spans 53 residues: TGALLLDGNTLNYFGKIFLPDGLLDRYQAFELIHARKPEDFEKYQAFELIHAR.

Residue F18 coordinates chlorophyll b. Chlorophyll a contacts are provided by E48 and H51. Chlorophyll b is bound at residue R53.

Belongs to the light-harvesting chlorophyll a/b-binding (LHC) protein family. As to quaternary structure, the LHC complex consists of chlorophyll a-b binding proteins. The cofactor is Binds at least 14 chlorophylls (8 Chl-a and 6 Chl-b) and carotenoids such as lutein and neoxanthin.. Post-translationally, photoregulated by reversible phosphorylation of its threonine residues.

It is found in the plastid. The protein localises to the chloroplast thylakoid membrane. The light-harvesting complex (LHC) functions as a light receptor, it captures and delivers excitation energy to photosystems with which it is closely associated. This chain is Chlorophyll a-b binding protein 1, chloroplastic, found in Populus euphratica (Euphrates poplar).